The sequence spans 311 residues: tRNA-cytidine(32) 2-sulfurtransferase (311 aa).

A PP-loop motif motif is present at residues 47-52 (SGGKDS). Cys-122, Cys-125, and Cys-213 together coordinate [4Fe-4S] cluster.

The protein belongs to the TtcA family. Homodimer. The cofactor is Mg(2+). Requires [4Fe-4S] cluster as cofactor.

The protein localises to the cytoplasm. The catalysed reaction is cytidine(32) in tRNA + S-sulfanyl-L-cysteinyl-[cysteine desulfurase] + AH2 + ATP = 2-thiocytidine(32) in tRNA + L-cysteinyl-[cysteine desulfurase] + A + AMP + diphosphate + H(+). It functions in the pathway tRNA modification. Its function is as follows. Catalyzes the ATP-dependent 2-thiolation of cytidine in position 32 of tRNA, to form 2-thiocytidine (s(2)C32). The sulfur atoms are provided by the cysteine/cysteine desulfurase (IscS) system. This is tRNA-cytidine(32) 2-sulfurtransferase from Escherichia coli (strain 55989 / EAEC).